The following is a 226-amino-acid chain: Phosphoribosyl-dephospho-CoA transferase (226 aa).

Residues Asp148 and Asp150 contribute to the active site.

This sequence belongs to the MdcG family.

It carries out the reaction apo-[malonate decarboxylase ACP] + 2'-(5''-triphospho-alpha-D-ribosyl)-3'-dephospho-CoA = holo-[malonate decarboxylase ACP] + diphosphate. In terms of biological role, transfers 2'-(5-triphosphoribosyl)-3'-dephosphocoenzyme-A to the apo-[acyl-carrier-protein] of the malonate decarboxylase to yield holo-[acyl-carrier-protein]. In Bradyrhizobium diazoefficiens (strain JCM 10833 / BCRC 13528 / IAM 13628 / NBRC 14792 / USDA 110), this protein is Phosphoribosyl-dephospho-CoA transferase.